Here is a 375-residue protein sequence, read N- to C-terminus: 23S rRNA (uracil(747)-C(5))-methyltransferase RlmC (375 aa).

4 residues coordinate [4Fe-4S] cluster: cysteine 3, cysteine 11, cysteine 14, and cysteine 87. Residues glutamine 212, phenylalanine 241, glutamate 262, and asparagine 307 each coordinate S-adenosyl-L-methionine. The Nucleophile role is filled by cysteine 334.

It belongs to the class I-like SAM-binding methyltransferase superfamily. RNA M5U methyltransferase family. RlmC subfamily.

The enzyme catalyses uridine(747) in 23S rRNA + S-adenosyl-L-methionine = 5-methyluridine(747) in 23S rRNA + S-adenosyl-L-homocysteine + H(+). In terms of biological role, catalyzes the formation of 5-methyl-uridine at position 747 (m5U747) in 23S rRNA. This is 23S rRNA (uracil(747)-C(5))-methyltransferase RlmC from Escherichia coli (strain K12 / MC4100 / BW2952).